A 1093-amino-acid polypeptide reads, in one-letter code: Atos homolog protein A (1093 aa).

The tract at residues 29–37 (ALLITEGRT) is transactivation domain 1 (TAD1). Disordered stretches follow at residues 396–479 (AGRP…GNPL), 558–579 (SSKS…GESK), and 746–788 (HDNF…GSMR). Residues 746 to 763 (HDNFKNKNRQDKTKAAHD) show a composition bias toward basic and acidic residues. Positions 895-952 (LLGNFEESVLNFRLDPLGIVEGFTAEVGASGVFCPTHMTLPVEVSFYSVSDDNAPSPY) are required for macropage invasion. The interval 979–987 (FNPNKTVVK) is transactivation domain 2 (TAD2).

The protein belongs to the ATOS family.

The protein localises to the nucleus. Functionally, transcription regulator that syncronizes transcriptional and translational programs to promote macrophage invasion of tissues. This chain is Atos homolog protein A (ATOSA), found in Gallus gallus (Chicken).